The following is an 87-amino-acid chain: Small ribosomal subunit protein bS16 (87 aa).

This sequence belongs to the bacterial ribosomal protein bS16 family.

This chain is Small ribosomal subunit protein bS16, found in Aster yellows witches'-broom phytoplasma (strain AYWB).